Consider the following 247-residue polypeptide: SFKSDEAKQELADLNADLMVFVAYGMLLPQAVLDTPKLGCINVHGSILPRWRCAAPIQRSIWAGDAETGVTIMQMDIGLDTGDMLKIATLPIETTDTSASMYEKLAELGPEALIDCLADIAAGKAVPVKQDDELANYAKKLSKEEARINWNDDAAHIERCVRAFNPWPMSHFEAAENSIKVWKAVWQSKPVTTSGTIVQADKTGIYVVTGNGVLVLEQLQVPGKKAMSVQDILNSRAAWFEVGTLLV.

It belongs to the Fmt family.

The enzyme catalyses L-methionyl-tRNA(fMet) + (6R)-10-formyltetrahydrofolate = N-formyl-L-methionyl-tRNA(fMet) + (6S)-5,6,7,8-tetrahydrofolate + H(+). In terms of biological role, attaches a formyl group to the free amino group of methionyl-tRNA(fMet). The formyl group appears to play a dual role in the initiator identity of N-formylmethionyl-tRNA by promoting its recognition by IF2 and preventing the misappropriation of this tRNA by the elongation apparatus. This is Methionyl-tRNA formyltransferase (fmt) from Vibrio alginolyticus.